A 182-amino-acid chain; its full sequence is Adenylate kinase (182 aa).

An ATP-binding site is contributed by 12 to 17 (GAGKGT). Residues 32 to 61 (STGDLLRDEVSSGSVLGIKAAEIMNKGELV) are NMP. AMP-binding positions include threonine 33, arginine 38, 59–61 (ELV), 85–88 (GFPR), and glutamine 92. Positions 126–132 (ERGRQDD) are LID. Arginine 127 serves as a coordination point for ATP. Arginine 129 and arginine 140 together coordinate AMP. Alanine 168 serves as a coordination point for ATP.

The protein belongs to the adenylate kinase family. As to quaternary structure, monomer.

It localises to the cytoplasm. It catalyses the reaction AMP + ATP = 2 ADP. It participates in purine metabolism; AMP biosynthesis via salvage pathway; AMP from ADP: step 1/1. Functionally, catalyzes the reversible transfer of the terminal phosphate group between ATP and AMP. Plays an important role in cellular energy homeostasis and in adenine nucleotide metabolism. The sequence is that of Adenylate kinase from Prochlorococcus marinus (strain NATL2A).